Consider the following 617-residue polypeptide: Mitochondrial Rho GTPase 2 (617 aa).

Over 1–590 the chain is Cytoplasmic; sequence MKRDVRILLL…LNGSDMSSTS (590 aa). The 167-residue stretch at 2-168 folds into the Miro 1 domain; that stretch reads KRDVRILLLG…FYYAQKAVLH (167 aa). GTP contacts are provided by Gly16, Lys17, Thr18, and Ser19. A Mg(2+)-binding site is contributed by Thr18. Asp57 lines the Mg(2+) pocket. GTP contacts are provided by Ser59, Asn118, Lys119, Asp121, Ala149, and Lys150. 2 consecutive EF-hand domains span residues 184-219 and 304-339; these read QCVR…CFGN and LGHQ…LPYM. Ca(2+)-binding residues include Asp197, Asp199, Asp201, Glu208, Asp317, Asp319, Asp321, and Glu328. The region spanning 416–578 is the Miro 2 domain; the sequence is RTVFLCKVIG…YSKLTWAAMY (163 aa). GTP-binding residues include Gly428, Gly430, Lys431, and Thr432. Mg(2+) is bound by residues Thr432 and Glu474. GTP-binding residues include Lys528 and Asp530. A helical; Anchor for type IV membrane protein membrane pass occupies residues 591 to 613; it reads FWLRVTLGATIAAMLGFALYRAF. The Mitochondrial intermembrane segment spans residues 614-617; that stretch reads SRHK.

It belongs to the mitochondrial Rho GTPase family. In terms of assembly, homodimer.

The protein resides in the mitochondrion outer membrane. It catalyses the reaction GTP + H2O = GDP + phosphate + H(+). It carries out the reaction ATP + H2O = ADP + phosphate + H(+). The catalysed reaction is UTP + H2O = UDP + phosphate + H(+). Atypical mitochondrial nucleoside-triphosphatase (NTPase) involved in mitochondrial trafficking. Probably involved in control of anterograde transport of mitochondria and their subcellular distribution. Can hydrolyze GTP, ATP and UTP. This chain is Mitochondrial Rho GTPase 2 (rhot2), found in Danio rerio (Zebrafish).